A 393-amino-acid polypeptide reads, in one-letter code: Major outer membrane protein P.IA (393 aa).

The signal sequence occupies residues methionine 1–alanine 19.

The protein belongs to the Gram-negative porin family. Homotrimer.

It localises to the cell outer membrane. Serves as a slightly cation selective porin. Major antigen on the gonococcal cell surface and it may have pathogenic properties in addition to its porin activity. The chain is Major outer membrane protein P.IA (porA) from Neisseria meningitidis serogroup C.